The following is a 207-amino-acid chain: Small ribosomal subunit protein eS1 (207 aa).

It belongs to the eukaryotic ribosomal protein eS1 family.

This is Small ribosomal subunit protein eS1 from Methanosarcina barkeri (strain Fusaro / DSM 804).